Reading from the N-terminus, the 440-residue chain is Protein disulfide-isomerase A6 (440 aa).

An N-terminal signal peptide occupies residues Met-1–Gly-19. 2 consecutive Thioredoxin domains span residues Leu-20 to Gln-133 and Gln-151 to Ala-287. Cys-55 and Cys-58 are oxidised to a cystine. Ser-129, Ser-156, and Ser-158 each carry phosphoserine. The disordered stretch occupies residues Leu-139–Asp-161. Over residues Gly-152 to Asp-161 the composition is skewed to basic and acidic residues. A disulfide bridge connects residues Cys-190 and Cys-193. Residues Gly-399–Leu-440 form a disordered region. The segment covering Leu-419–Leu-440 has biased composition (acidic residues). At Ser-428 the chain carries Phosphoserine. A Prevents secretion from ER motif is present at residues Lys-437–Leu-440.

Belongs to the protein disulfide isomerase family. In terms of assembly, part of a large chaperone multiprotein complex comprising DNAJB11, HSP90B1, HSPA5, HYOU, PDIA2, PDIA4, PDIA6, PPIB, SDF2L1, UGGT1 and very small amounts of ERP29, but not, or at very low levels, CALR nor CANX. Interacts with MICA on the surface of tumor cells, leading to MICA disulfide bond reduction which is required for its release from tumor cells. Interacts with ITGB3 following platelet stimulation. Interacts with ERN1; the interaction is direct. Interacts with EIF2AK3.

The protein localises to the endoplasmic reticulum lumen. It localises to the cell membrane. Its subcellular location is the melanosome. It carries out the reaction Catalyzes the rearrangement of -S-S- bonds in proteins.. Its function is as follows. May function as a chaperone that inhibits aggregation of misfolded proteins. Negatively regulates the unfolded protein response (UPR) through binding to UPR sensors such as ERN1, which in turn inactivates ERN1 signaling. May also regulate the UPR via the EIF2AK3 UPR sensor. Plays a role in platelet aggregation and activation by agonists such as convulxin, collagen and thrombin. The sequence is that of Protein disulfide-isomerase A6 (Pdia6) from Mus musculus (Mouse).